Reading from the N-terminus, the 201-residue chain is dCTP deaminase, dUMP-forming (201 aa).

DCTP is bound by residues 101–106, D119, 127–129, Q148, Y162, and Q174; these read KSSLGR and TLE. E129 functions as the Proton donor/acceptor in the catalytic mechanism. Over residues 166–183 the composition is skewed to polar residues; sequence EYSSRYQGQRGPTASRSF. Residues 166–201 are disordered; the sequence is EYSSRYQGQRGPTASRSFLNFHRTDVSGTEAGRSSS.

It belongs to the dCTP deaminase family. As to quaternary structure, homotrimer.

The enzyme catalyses dCTP + 2 H2O = dUMP + NH4(+) + diphosphate. The protein operates within pyrimidine metabolism; dUMP biosynthesis; dUMP from dCTP: step 1/1. In terms of biological role, bifunctional enzyme that catalyzes both the deamination of dCTP to dUTP and the hydrolysis of dUTP to dUMP without releasing the toxic dUTP intermediate. The sequence is that of dCTP deaminase, dUMP-forming from Leifsonia xyli subsp. xyli (strain CTCB07).